A 752-amino-acid polypeptide reads, in one-letter code: Zinc finger protein 184 (752 aa).

Positions 28 to 99 (VTFKDVIVDF…EPSIPVGTPG (72 aa)) constitute a KRAB domain. A phosphoserine mark is found at Ser-117, Ser-122, and Ser-200. A Glycyl lysine isopeptide (Lys-Gly) (interchain with G-Cter in SUMO2) cross-link involves residue Lys-207. C2H2-type zinc fingers lie at residues 223–245 (CKCN…QRTH), 251–273 (YKCN…QRIH), 279–301 (YKCD…QRIH), 307–329 (YKCD…QRIH), 335–357 (YTCN…QKIH), 363–385 (FKCD…QKIH), 391–413 (YKCN…HMIH), 419–441 (YECN…QKTH), 447–469 (YDCA…LKIH), 475–497 (YKCN…RRIH), 503–525 (FECS…QKTH), 531–553 (YECK…ERIH), 559–581 (YQCH…RKIH), 587–609 (YKCN…KRIH), 615–637 (YECA…QKTH), 643–665 (YHCN…QRIH), 671–693 (YKCN…QNTH), 699–721 (YNCN…QRIH), and 727–749 (FGCN…QRLH).

This sequence belongs to the krueppel C2H2-type zinc-finger protein family.

The protein localises to the nucleus. May be involved in transcriptional regulation. This is Zinc finger protein 184 (ZNF184) from Bos taurus (Bovine).